We begin with the raw amino-acid sequence, 367 residues long: Glutamate 5-kinase (367 aa).

Lys10 is a binding site for ATP. Substrate-binding residues include Ser50, Asp137, and Asn149. ATP contacts are provided by residues 169–170 (TD) and 211–217 (TGGMSTK). The PUA domain maps to 275–353 (AGEITVDDGA…QQIAEILGYE (79 aa)).

It belongs to the glutamate 5-kinase family.

Its subcellular location is the cytoplasm. The catalysed reaction is L-glutamate + ATP = L-glutamyl 5-phosphate + ADP. The protein operates within amino-acid biosynthesis; L-proline biosynthesis; L-glutamate 5-semialdehyde from L-glutamate: step 1/2. Its function is as follows. Catalyzes the transfer of a phosphate group to glutamate to form L-glutamate 5-phosphate. The chain is Glutamate 5-kinase from Pectobacterium carotovorum subsp. carotovorum (strain PC1).